The chain runs to 184 residues: GTP cyclohydrolase 1 (184 aa).

Zn(2+)-binding residues include Cys75, His78, and Cys146.

This sequence belongs to the GTP cyclohydrolase I family. Homomer.

It carries out the reaction GTP + H2O = 7,8-dihydroneopterin 3'-triphosphate + formate + H(+). Its pathway is cofactor biosynthesis; 7,8-dihydroneopterin triphosphate biosynthesis; 7,8-dihydroneopterin triphosphate from GTP: step 1/1. This chain is GTP cyclohydrolase 1, found in Streptococcus pneumoniae (strain Hungary19A-6).